The sequence spans 301 residues: Probable tRNA pseudouridine synthase B (301 aa).

Catalysis depends on Asp54, which acts as the Nucleophile. The PUA domain maps to 227–301 (LPRLTIADSA…VVVALERVLV (75 aa)).

This sequence belongs to the pseudouridine synthase TruB family. Type 2 subfamily.

The catalysed reaction is uridine(55) in tRNA = pseudouridine(55) in tRNA. Its function is as follows. Could be responsible for synthesis of pseudouridine from uracil-55 in the psi GC loop of transfer RNAs. This Halobacterium salinarum (strain ATCC 29341 / DSM 671 / R1) protein is Probable tRNA pseudouridine synthase B.